Consider the following 639-residue polypeptide: Poly(A)-specific ribonuclease PARN (639 aa).

Asp28 and Glu30 together coordinate a divalent metal cation. Residues Ser163 and Ser167 each carry the phosphoserine modification. Residues 178–245 enclose the R3H domain; the sequence is KKFIDQVVEK…ERYIVISKVD (68 aa). N6-acetyllysine is present on Lys220. A divalent metal cation-binding residues include Asp292 and Asp382. Residue Lys499 is modified to N6-acetyllysine. At Ser530 the chain carries Phosphoserine. Ser557 carries the post-translational modification Phosphoserine; by MAPKAPK2. The segment at 560 to 639 is disordered; that stretch reads APSTVGKRNL…ATLFEVPDTW (80 aa). Ser583 and Ser587 each carry phosphoserine. Residues 606-615 show a composition bias toward basic residues; it reads KKAKKLKRMK. Phosphoserine is present on residues Ser619, Ser623, and Ser628. Thr631 carries the phosphothreonine modification.

The protein belongs to the CAF1 family. As to quaternary structure, homodimer. Found in a mRNA decay complex with RENT1, RENT2 and RENT3B. Interacts with KHSRP. Interacts with CELF1/CUGBP1. Interacts with ZC3HAV1 in an RNA-independent manner. Interacts with DHX36. The cofactor is Mg(2+). In terms of processing, phosphorylation by MAPKAPK2, preventing GADD45A mRNA degradation after genotoxic stress. Ubiquitous.

Its subcellular location is the nucleus. The protein resides in the cytoplasm. The protein localises to the nucleolus. The catalysed reaction is Exonucleolytic cleavage of poly(A) to 5'-AMP.. 3'-exoribonuclease that has a preference for poly(A) tails of mRNAs, thereby efficiently degrading poly(A) tails. Exonucleolytic degradation of the poly(A) tail is often the first step in the decay of eukaryotic mRNAs and is also used to silence certain maternal mRNAs translationally during oocyte maturation and early embryonic development. Interacts with both the 3'-end poly(A) tail and the 5'-end cap structure during degradation, the interaction with the cap structure being required for an efficient degradation of poly(A) tails. Involved in nonsense-mediated mRNA decay, a critical process of selective degradation of mRNAs that contain premature stop codons. Also involved in degradation of inherently unstable mRNAs that contain AU-rich elements (AREs) in their 3'-UTR, possibly via its interaction with KHSRP. Probably mediates the removal of poly(A) tails of AREs mRNAs, which constitutes the first step of destabilization. Also able to recognize and trim poly(A) tails of microRNAs such as MIR21 and H/ACA box snoRNAs (small nucleolar RNAs) leading to microRNAs degradation or snoRNA increased stability. In Homo sapiens (Human), this protein is Poly(A)-specific ribonuclease PARN (PARN).